The sequence spans 245 residues: tRNA pseudouridine synthase A (245 aa).

Aspartate 52 (nucleophile) is an active-site residue. Tyrosine 111 provides a ligand contact to substrate.

Belongs to the tRNA pseudouridine synthase TruA family. As to quaternary structure, homodimer.

The catalysed reaction is uridine(38/39/40) in tRNA = pseudouridine(38/39/40) in tRNA. Its function is as follows. Formation of pseudouridine at positions 38, 39 and 40 in the anticodon stem and loop of transfer RNAs. This chain is tRNA pseudouridine synthase A, found in Wolbachia pipientis subsp. Culex pipiens (strain wPip).